The primary structure comprises 398 residues: GPI mannosyltransferase 1 (398 aa).

The next 9 helical transmembrane spans lie at 4–24, 79–99, 114–136, 156–176, 209–229, 271–291, 305–325, 341–361, and 375–395; these read LKYL…FGLY, WYHF…LIIL, MILS…GSAE, VILS…PIIY, IIIT…KYGW, IEKI…PLIF, FVFV…FLIF, ITGI…LYFA, and GLMY…MKFI.

This sequence belongs to the PIGM family.

Its subcellular location is the endoplasmic reticulum membrane. It functions in the pathway glycolipid biosynthesis; glycosylphosphatidylinositol-anchor biosynthesis. Its function is as follows. Mannosyltransferase involved in glycosylphosphatidylinositol-anchor biosynthesis. Transfers the first alpha-1,4-mannose to GlcN-acyl-PI during GPI precursor assembly. Required for cell wall integrity. This is GPI mannosyltransferase 1 (GPI14) from Candida albicans (strain SC5314 / ATCC MYA-2876) (Yeast).